A 946-amino-acid polypeptide reads, in one-letter code: Bifunctional glutamine synthetase adenylyltransferase/adenylyl-removing enzyme (946 aa).

Positions 1-440 (MKPLSSPLQQ…VFNELIGDDE (440 aa)) are adenylyl removase. The tract at residues 449-946 (SEQWRELWQD…ASWQKWLVEE (498 aa)) is adenylyl transferase.

Belongs to the GlnE family. Requires Mg(2+) as cofactor.

It carries out the reaction [glutamine synthetase]-O(4)-(5'-adenylyl)-L-tyrosine + phosphate = [glutamine synthetase]-L-tyrosine + ADP. The catalysed reaction is [glutamine synthetase]-L-tyrosine + ATP = [glutamine synthetase]-O(4)-(5'-adenylyl)-L-tyrosine + diphosphate. Its function is as follows. Involved in the regulation of glutamine synthetase GlnA, a key enzyme in the process to assimilate ammonia. When cellular nitrogen levels are high, the C-terminal adenylyl transferase (AT) inactivates GlnA by covalent transfer of an adenylyl group from ATP to specific tyrosine residue of GlnA, thus reducing its activity. Conversely, when nitrogen levels are low, the N-terminal adenylyl removase (AR) activates GlnA by removing the adenylyl group by phosphorolysis, increasing its activity. The regulatory region of GlnE binds the signal transduction protein PII (GlnB) which indicates the nitrogen status of the cell. This is Bifunctional glutamine synthetase adenylyltransferase/adenylyl-removing enzyme from Shigella dysenteriae serotype 1 (strain Sd197).